A 324-amino-acid chain; its full sequence is D-erythronate dehydrogenase (324 aa).

3 residues coordinate NAD(+): Ser125, Tyr149, and Lys153. Tyr149 serves as the catalytic Proton acceptor.

Belongs to the NAD(P)-dependent epimerase/dehydratase family.

It catalyses the reaction D-erythronate + NAD(+) = 2-dehydro-D-erythronate + NADH + H(+). Its function is as follows. Catalyzes oxidation of D-erythronate to 2-oxo-tetronate. Can use either NAD(+) or NADP(+) as cosubstrate, with a preference for NAD(+). This is D-erythronate dehydrogenase from Cupriavidus necator (strain ATCC 17699 / DSM 428 / KCTC 22496 / NCIMB 10442 / H16 / Stanier 337) (Ralstonia eutropha).